The sequence spans 156 residues: Small ribosomal subunit protein uS7 (156 aa).

It belongs to the universal ribosomal protein uS7 family. Part of the 30S ribosomal subunit. Contacts proteins S9 and S11.

Its function is as follows. One of the primary rRNA binding proteins, it binds directly to 16S rRNA where it nucleates assembly of the head domain of the 30S subunit. Is located at the subunit interface close to the decoding center, probably blocks exit of the E-site tRNA. The protein is Small ribosomal subunit protein uS7 of Mycobacterium tuberculosis (strain CDC 1551 / Oshkosh).